Consider the following 466-residue polypeptide: Phosphomethylpyrimidine synthase (466 aa).

Residues Asn80, Met109, Tyr139, His175, 195 to 197 (SRG), 236 to 239 (DSLR), and Glu275 contribute to the substrate site. His279 lines the Zn(2+) pocket. Tyr302 provides a ligand contact to substrate. His343 lines the Zn(2+) pocket. The [4Fe-4S] cluster site is built by Cys423, Cys426, and Cys431.

The protein belongs to the ThiC family. It depends on [4Fe-4S] cluster as a cofactor.

It catalyses the reaction 5-amino-1-(5-phospho-beta-D-ribosyl)imidazole + S-adenosyl-L-methionine = 4-amino-2-methyl-5-(phosphooxymethyl)pyrimidine + CO + 5'-deoxyadenosine + formate + L-methionine + 3 H(+). The protein operates within cofactor biosynthesis; thiamine diphosphate biosynthesis. Functionally, catalyzes the synthesis of the hydroxymethylpyrimidine phosphate (HMP-P) moiety of thiamine from aminoimidazole ribotide (AIR) in a radical S-adenosyl-L-methionine (SAM)-dependent reaction. This is Phosphomethylpyrimidine synthase from Prochlorococcus marinus (strain NATL2A).